The chain runs to 147 residues: 3-dehydroquinate dehydratase (147 aa).

Residue Tyr-23 is the Proton acceptor of the active site. The substrate site is built by Asn-74, His-80, and Asp-87. Catalysis depends on His-100, which acts as the Proton donor. Residues 101–102 (LS) and Arg-111 contribute to the substrate site.

It belongs to the type-II 3-dehydroquinase family. Homododecamer.

The enzyme catalyses 3-dehydroquinate = 3-dehydroshikimate + H2O. Its pathway is metabolic intermediate biosynthesis; chorismate biosynthesis; chorismate from D-erythrose 4-phosphate and phosphoenolpyruvate: step 3/7. Functionally, catalyzes a trans-dehydration via an enolate intermediate. This chain is 3-dehydroquinate dehydratase, found in Clostridium botulinum (strain Kyoto / Type A2).